Consider the following 424-residue polypeptide: Methylthioribose-1-phosphate isomerase (424 aa).

Asp-281 (proton donor) is an active-site residue.

The protein belongs to the eIF-2B alpha/beta/delta subunits family. MtnA subfamily.

It is found in the cytoplasm. The protein localises to the nucleus. The enzyme catalyses 5-(methylsulfanyl)-alpha-D-ribose 1-phosphate = 5-(methylsulfanyl)-D-ribulose 1-phosphate. It participates in amino-acid biosynthesis; L-methionine biosynthesis via salvage pathway; L-methionine from S-methyl-5-thio-alpha-D-ribose 1-phosphate: step 1/6. In terms of biological role, catalyzes the interconversion of methylthioribose-1-phosphate (MTR-1-P) into methylthioribulose-1-phosphate (MTRu-1-P). This chain is Methylthioribose-1-phosphate isomerase, found in Candida dubliniensis (strain CD36 / ATCC MYA-646 / CBS 7987 / NCPF 3949 / NRRL Y-17841) (Yeast).